The following is a 596-amino-acid chain: Arginine--tRNA ligase (596 aa).

Positions 135–145 (ANPTGPIHIGG) match the 'HIGH' region motif. Residues 227–249 (PRVDGGADQDGNPLGEGDSEQRE) form a disordered region.

This sequence belongs to the class-I aminoacyl-tRNA synthetase family. In terms of assembly, monomer.

Its subcellular location is the cytoplasm. It carries out the reaction tRNA(Arg) + L-arginine + ATP = L-arginyl-tRNA(Arg) + AMP + diphosphate. The chain is Arginine--tRNA ligase from Bifidobacterium adolescentis (strain ATCC 15703 / DSM 20083 / NCTC 11814 / E194a).